The following is a 193-amino-acid chain: Large ribosomal subunit protein uL5 (193 aa).

This sequence belongs to the universal ribosomal protein uL5 family. In terms of assembly, part of the 50S ribosomal subunit; part of the 5S rRNA/L5/L18/L25 subcomplex. Contacts the 5S rRNA and the P site tRNA. Forms a bridge to the 30S subunit in the 70S ribosome.

This is one of the proteins that bind and probably mediate the attachment of the 5S RNA into the large ribosomal subunit, where it forms part of the central protuberance. In the 70S ribosome it contacts protein S13 of the 30S subunit (bridge B1b), connecting the 2 subunits; this bridge is implicated in subunit movement. Contacts the P site tRNA; the 5S rRNA and some of its associated proteins might help stabilize positioning of ribosome-bound tRNAs. This is Large ribosomal subunit protein uL5 from Arthrobacter sp. (strain FB24).